The primary structure comprises 290 residues: Outer dense fiber protein 4 (290 aa).

Ser-28 carries the phosphoserine modification. 4 consecutive transmembrane segments (helical) span residues 44 to 64, 132 to 152, 164 to 184, and 201 to 221; these read AQVV…LMVF, ISFI…HLPY, LIGI…LLLF, and IGWS…CGIL. Positions 262 to 290 are disordered; that stretch reads ADILDPTQDDQKPLSSDNIALPPNPDTTD.

It is found in the membrane. Component of the outer dense fibers (ODF) of spermatozoa which could be involved in sperm tail structure, sperm movement and general organization of cellular cytoskeleton. In Rattus norvegicus (Rat), this protein is Outer dense fiber protein 4 (Odf4).